The following is a 385-amino-acid chain: Transmembrane protein 271 (385 aa).

Transmembrane regions (helical) follow at residues cysteine 9–leucine 29 and glycine 50–leucine 70. Residues glutamate 83–alanine 111 are disordered. Residues leucine 121 to isoleucine 141 traverse the membrane as a helical segment. Residues proline 160–alanine 203 are disordered. The span at proline 163 to arginine 197 shows a compositional bias: low complexity. A helical transmembrane segment spans residues valine 219–valine 239. The disordered stretch occupies residues serine 245–glutamate 305. Basic residues predominate over residues glutamine 246–glycine 258. The segment covering arginine 259–serine 277 has biased composition (low complexity). Basic residues predominate over residues arginine 278 to glutamine 292.

It is found in the membrane. This is Transmembrane protein 271 from Homo sapiens (Human).